We begin with the raw amino-acid sequence, 485 residues long: Bifunctional protein HldE (485 aa).

The tract at residues 1-326 (MDFSSTRVLC…AELDESAISN (326 aa)) is ribokinase. 195–198 (NVKE) is an ATP binding site. Aspartate 271 is an active-site residue. A cytidylyltransferase region spans residues 354–485 (FTNGCFDILH…GIVKKISTLT (132 aa)).

The protein in the N-terminal section; belongs to the carbohydrate kinase PfkB family. This sequence in the C-terminal section; belongs to the cytidylyltransferase family. As to quaternary structure, homodimer.

It carries out the reaction D-glycero-beta-D-manno-heptose 7-phosphate + ATP = D-glycero-beta-D-manno-heptose 1,7-bisphosphate + ADP + H(+). The enzyme catalyses D-glycero-beta-D-manno-heptose 1-phosphate + ATP + H(+) = ADP-D-glycero-beta-D-manno-heptose + diphosphate. It participates in nucleotide-sugar biosynthesis; ADP-L-glycero-beta-D-manno-heptose biosynthesis; ADP-L-glycero-beta-D-manno-heptose from D-glycero-beta-D-manno-heptose 7-phosphate: step 1/4. It functions in the pathway nucleotide-sugar biosynthesis; ADP-L-glycero-beta-D-manno-heptose biosynthesis; ADP-L-glycero-beta-D-manno-heptose from D-glycero-beta-D-manno-heptose 7-phosphate: step 3/4. Catalyzes the phosphorylation of D-glycero-D-manno-heptose 7-phosphate at the C-1 position to selectively form D-glycero-beta-D-manno-heptose-1,7-bisphosphate. Its function is as follows. Catalyzes the ADP transfer from ATP to D-glycero-beta-D-manno-heptose 1-phosphate, yielding ADP-D-glycero-beta-D-manno-heptose. This Granulibacter bethesdensis (strain ATCC BAA-1260 / CGDNIH1) protein is Bifunctional protein HldE.